Consider the following 229-residue polypeptide: Triosephosphate isomerase (229 aa).

Substrate is bound at residue 16 to 18 (NFK). His-100 serves as the catalytic Electrophile. Glu-148 serves as the catalytic Proton acceptor. Substrate is bound by residues Ile-153, Gly-188, and 209–210 (AS).

It belongs to the triosephosphate isomerase family. Homotetramer; dimer of dimers.

The protein resides in the cytoplasm. The catalysed reaction is D-glyceraldehyde 3-phosphate = dihydroxyacetone phosphate. Its pathway is carbohydrate biosynthesis; gluconeogenesis. It participates in carbohydrate degradation; glycolysis; D-glyceraldehyde 3-phosphate from glycerone phosphate: step 1/1. In terms of biological role, involved in the gluconeogenesis. Catalyzes stereospecifically the conversion of dihydroxyacetone phosphate (DHAP) to D-glyceraldehyde-3-phosphate (G3P). The chain is Triosephosphate isomerase from Methanothermobacter thermautotrophicus (strain ATCC 29096 / DSM 1053 / JCM 10044 / NBRC 100330 / Delta H) (Methanobacterium thermoautotrophicum).